The sequence spans 363 residues: Nucleoporin SEH1 (363 aa).

WD repeat units follow at residues 15–54 (AHRDLIHCVSFDPHGRRMATCASDMTMAIWDRKPDGNWRR), 60–101 (CHGG…SEKD), 108–149 (QWIR…RIYE), 158–206 (RWNL…VIYE), 223–264 (DLPC…SAIL), and 287–326 (GDHRKAWRLRYNLMGSVISSTSLDGTLRSWKSLFVNQWVK).

Belongs to the WD repeat SEC13 family. In terms of assembly, component of the nuclear pore complex (NPC). Probably part of the GATOR complex.

The protein localises to the nucleus. It is found in the nuclear pore complex. Its subcellular location is the lysosome membrane. The protein resides in the nucleus envelope. Probable component of the nuclear pore complex (NPC) which is involved in the trafficking of macromolecules between the cytoplasm and nucleus. Functionally, as a component of the GATOR complex may function in the amino acid-sensing branch of the TORC1 signaling pathway. This is Nucleoporin SEH1 from Caenorhabditis elegans.